An 831-amino-acid chain; its full sequence is Translation initiation factor IF-2 (831 aa).

The tr-type G domain maps to 329 to 499 (TRAPVVTVMG…LLISEMQDLK (171 aa)). Residues 338–345 (GHVDHGKT) are G1. 338–345 (GHVDHGKT) contacts GTP. The tract at residues 363-367 (GITQH) is G2. Residues 385–388 (DTPG) are G3. GTP contacts are provided by residues 385–389 (DTPGH) and 439–442 (NKID). The tract at residues 439-442 (NKID) is G4. The G5 stretch occupies residues 475 to 477 (SAL).

This sequence belongs to the TRAFAC class translation factor GTPase superfamily. Classic translation factor GTPase family. IF-2 subfamily.

The protein resides in the cytoplasm. Its function is as follows. One of the essential components for the initiation of protein synthesis. Protects formylmethionyl-tRNA from spontaneous hydrolysis and promotes its binding to the 30S ribosomal subunits. Also involved in the hydrolysis of GTP during the formation of the 70S ribosomal complex. The chain is Translation initiation factor IF-2 from Rickettsia typhi (strain ATCC VR-144 / Wilmington).